We begin with the raw amino-acid sequence, 113 residues long: Ribulose bisphosphate carboxylase small subunit (113 aa).

The protein belongs to the RuBisCO small chain family. In terms of assembly, heterohexadecamer of 8 large and 8 small subunits. Forms a CsoS2-CsoS1-RuBisCO complex.

Its subcellular location is the carboxysome. Its function is as follows. RuBisCO catalyzes two reactions: the carboxylation of D-ribulose 1,5-bisphosphate, the primary event in carbon dioxide fixation, as well as the oxidative fragmentation of the pentose substrate in the photorespiration process. Both reactions occur simultaneously and in competition at the same active site. Although the small subunit is not catalytic it is essential for maximal activity. There are estimated to be 152 RuBisCO holoenzymes per carboxysome. This chain is Ribulose bisphosphate carboxylase small subunit, found in Prochlorococcus marinus subsp. pastoris (strain CCMP1986 / NIES-2087 / MED4).